The primary structure comprises 548 residues: Rhodopsin kinase GRK7 (548 aa).

Ser34 is subject to Phosphoserine; by PKA. The RGS domain maps to 54–171 (FHSLCEQQPI…LASPFYDRFL (118 aa)). Residues 186 to 449 (FTEFRVLGKG…ADDPRKHPFF (264 aa)) enclose the Protein kinase domain. ATP is bound by residues 192–200 (LGKGGFGEV) and Lys215. Asp311 functions as the Proton acceptor in the catalytic mechanism. Positions 450–515 (QTVNFPRLEA…GAVPVAWQEE (66 aa)) constitute an AGC-kinase C-terminal domain. A disordered region spans residues 523–548 (EELNDPNRPSGDGKGDSSKSGVCLLL). Cys545 is subject to Cysteine methyl ester. Residue Cys545 is the site of S-geranylgeranyl cysteine attachment. A propeptide spans 546-548 (LLL) (removed in mature form).

Belongs to the protein kinase superfamily. AGC Ser/Thr protein kinase family. GPRK subfamily. Interacts (when prenylated) with PDE6D; this promotes release from membranes. In terms of processing, autophosphorylated. Phosphorylation at Ser-34 is regulated by light and activated by cAMP. Retina. Cones and rod.

The protein resides in the membrane. It carries out the reaction L-threonyl-[rhodopsin] + ATP = O-phospho-L-threonyl-[rhodopsin] + ADP + H(+). The catalysed reaction is L-seryl-[rhodopsin] + ATP = O-phospho-L-seryl-[rhodopsin] + ADP + H(+). With respect to regulation, inhibited by phosphorylation of Ser-34. In terms of biological role, retina-specific kinase involved in the shutoff of the photoresponse and adaptation to changing light conditions via cone opsin phosphorylation, including rhodopsin (RHO). The protein is Rhodopsin kinase GRK7 (GRK7) of Ictidomys tridecemlineatus (Thirteen-lined ground squirrel).